A 199-amino-acid chain; its full sequence is Ribonuclease P protein component 3 (199 aa).

The protein belongs to the eukaryotic/archaeal RNase P protein component 3 family. Consists of a catalytic RNA component and at least 4-5 protein subunits.

It localises to the cytoplasm. It catalyses the reaction Endonucleolytic cleavage of RNA, removing 5'-extranucleotides from tRNA precursor.. In terms of biological role, part of ribonuclease P, a protein complex that generates mature tRNA molecules by cleaving their 5'-ends. The polypeptide is Ribonuclease P protein component 3 (Archaeoglobus fulgidus (strain ATCC 49558 / DSM 4304 / JCM 9628 / NBRC 100126 / VC-16)).